The primary structure comprises 246 residues: Biosynthetic peptidoglycan transglycosylase (246 aa).

The chain crosses the membrane as a helical span at residues Ser20–Leu42.

It belongs to the glycosyltransferase 51 family.

The protein localises to the cell inner membrane. It catalyses the reaction [GlcNAc-(1-&gt;4)-Mur2Ac(oyl-L-Ala-gamma-D-Glu-L-Lys-D-Ala-D-Ala)](n)-di-trans,octa-cis-undecaprenyl diphosphate + beta-D-GlcNAc-(1-&gt;4)-Mur2Ac(oyl-L-Ala-gamma-D-Glu-L-Lys-D-Ala-D-Ala)-di-trans,octa-cis-undecaprenyl diphosphate = [GlcNAc-(1-&gt;4)-Mur2Ac(oyl-L-Ala-gamma-D-Glu-L-Lys-D-Ala-D-Ala)](n+1)-di-trans,octa-cis-undecaprenyl diphosphate + di-trans,octa-cis-undecaprenyl diphosphate + H(+). It functions in the pathway cell wall biogenesis; peptidoglycan biosynthesis. Its function is as follows. Peptidoglycan polymerase that catalyzes glycan chain elongation from lipid-linked precursors. The protein is Biosynthetic peptidoglycan transglycosylase of Xanthomonas campestris pv. campestris (strain 8004).